The sequence spans 188 residues: Acireductone dioxygenase (188 aa).

Fe(2+)-binding residues include His-97, His-99, Glu-103, and His-141. Ni(2+) contacts are provided by His-97, His-99, Glu-103, and His-141.

This sequence belongs to the acireductone dioxygenase (ARD) family. As to quaternary structure, monomer. Fe(2+) is required as a cofactor. Ni(2+) serves as cofactor.

It catalyses the reaction 1,2-dihydroxy-5-(methylsulfanyl)pent-1-en-3-one + O2 = 3-(methylsulfanyl)propanoate + CO + formate + 2 H(+). It carries out the reaction 1,2-dihydroxy-5-(methylsulfanyl)pent-1-en-3-one + O2 = 4-methylsulfanyl-2-oxobutanoate + formate + 2 H(+). It participates in amino-acid biosynthesis; L-methionine biosynthesis via salvage pathway; L-methionine from S-methyl-5-thio-alpha-D-ribose 1-phosphate: step 5/6. Its function is as follows. Catalyzes 2 different reactions between oxygen and the acireductone 1,2-dihydroxy-3-keto-5-methylthiopentene (DHK-MTPene) depending upon the metal bound in the active site. Fe-containing acireductone dioxygenase (Fe-ARD) produces formate and 2-keto-4-methylthiobutyrate (KMTB), the alpha-ketoacid precursor of methionine in the methionine recycle pathway. Ni-containing acireductone dioxygenase (Ni-ARD) produces methylthiopropionate, carbon monoxide and formate, and does not lie on the methionine recycle pathway. This Xanthomonas oryzae pv. oryzae (strain MAFF 311018) protein is Acireductone dioxygenase.